The chain runs to 189 residues: dCTP deaminase (189 aa).

Residues 112 to 117 (KSTYAR), 136 to 138 (TLE), Q157, Y171, and Q181 each bind dCTP. E138 acts as the Proton donor/acceptor in catalysis.

Belongs to the dCTP deaminase family. Homotrimer.

The catalysed reaction is dCTP + H2O + H(+) = dUTP + NH4(+). Its pathway is pyrimidine metabolism; dUMP biosynthesis; dUMP from dCTP (dUTP route): step 1/2. Its function is as follows. Catalyzes the deamination of dCTP to dUTP. The chain is dCTP deaminase from Xanthomonas axonopodis pv. citri (strain 306).